The primary structure comprises 632 residues: tRNA uridine 5-carboxymethylaminomethyl modification enzyme MnmG (632 aa).

FAD contacts are provided by residues 15–20, I127, and S182; that span reads GAGHAG. 276-290 is an NAD(+) binding site; sequence GPRYCPSIEDKIVRF. FAD is bound at residue Q373.

The protein belongs to the MnmG family. In terms of assembly, homodimer. Heterotetramer of two MnmE and two MnmG subunits. Requires FAD as cofactor.

The protein localises to the cytoplasm. Functionally, NAD-binding protein involved in the addition of a carboxymethylaminomethyl (cmnm) group at the wobble position (U34) of certain tRNAs, forming tRNA-cmnm(5)s(2)U34. The sequence is that of tRNA uridine 5-carboxymethylaminomethyl modification enzyme MnmG from Streptococcus pyogenes serotype M12 (strain MGAS2096).